A 484-amino-acid polypeptide reads, in one-letter code: Glutamate--tRNA ligase (484 aa).

The short motif at 11–21 (PSPTGYLHIGN) is the 'HIGH' region element. A 'KMSKS' region motif is present at residues 252–256 (KLSKR). Lysine 255 lines the ATP pocket.

Belongs to the class-I aminoacyl-tRNA synthetase family. Glutamate--tRNA ligase type 1 subfamily. Monomer.

The protein localises to the cytoplasm. It carries out the reaction tRNA(Glu) + L-glutamate + ATP = L-glutamyl-tRNA(Glu) + AMP + diphosphate. In terms of biological role, catalyzes the attachment of glutamate to tRNA(Glu) in a two-step reaction: glutamate is first activated by ATP to form Glu-AMP and then transferred to the acceptor end of tRNA(Glu). This Staphylococcus saprophyticus subsp. saprophyticus (strain ATCC 15305 / DSM 20229 / NCIMB 8711 / NCTC 7292 / S-41) protein is Glutamate--tRNA ligase.